Reading from the N-terminus, the 232-residue chain is Ribose-5-phosphate isomerase A (232 aa).

Substrate contacts are provided by residues 31–34 (TGST), 87–90 (DGAD), and 100–103 (KGGG). The active-site Proton acceptor is glutamate 109. Lysine 127 provides a ligand contact to substrate.

Belongs to the ribose 5-phosphate isomerase family. As to quaternary structure, homodimer.

The catalysed reaction is aldehydo-D-ribose 5-phosphate = D-ribulose 5-phosphate. It functions in the pathway carbohydrate degradation; pentose phosphate pathway; D-ribose 5-phosphate from D-ribulose 5-phosphate (non-oxidative stage): step 1/1. Functionally, catalyzes the reversible conversion of ribose-5-phosphate to ribulose 5-phosphate. The sequence is that of Ribose-5-phosphate isomerase A from Bifidobacterium longum (strain DJO10A).